A 658-amino-acid polypeptide reads, in one-letter code: Probable methyl-accepting chemotaxis protein BT9727_0469 (658 aa).

The Cytoplasmic portion of the chain corresponds to 1 to 14 (MLQGKLRRSSLKAK). The helical transmembrane segment at 15–35 (LLVSFVIVLILPSIVIGWTSY) threads the bilayer. Residues 36-283 (QQAKTNFNET…ANPIFYKTLT (248 aa)) lie on the Extracellular side of the membrane. A coiled-coil region spans residues 44–109 (ETILQSAEDN…NKLHPEIEAI (66 aa)). In terms of domain architecture, Cache spans 150–221 (ITAPYKSSTT…AHPTMKPGDK (72 aa)). The chain crosses the membrane as a helical span at residues 284 to 304 (VIGISLIIGGVLIYFIIASII). Residues 301–353 (ASIISPLKQLVISSKKISEGDLTETITVHSKDEIGQLGESFNEMAASLHHVIS) form the HAMP domain. Residues 305–658 (SPLKQLVISS…LQEMIGKFKV (354 aa)) lie on the Cytoplasmic side of the membrane. Glu368 carries the post-translational modification Glutamate methyl ester (Glu). The Methyl-accepting transducer domain maps to 372–622 (SMKQTSEATE…ENAASVQNIA (251 aa)). A Deamidated glutamine modification is found at Gln592. Position 592 is a glutamate methyl ester (Gln) (Gln592). 2 positions are modified to glutamate methyl ester (Glu): Glu627 and Glu634.

This sequence belongs to the methyl-accepting chemotaxis (MCP) protein family.

The protein resides in the cell membrane. Functionally, chemotactic-signal transducers respond to changes in the concentration of attractants and repellents in the environment, transduce a signal from the outside to the inside of the cell, and facilitate sensory adaptation through the variation of the level of methylation. This is Probable methyl-accepting chemotaxis protein BT9727_0469 from Bacillus thuringiensis subsp. konkukian (strain 97-27).